Reading from the N-terminus, the 258-residue chain is Protein U52 (258 aa).

It belongs to the herpesviridae UL79 family.

In Human herpesvirus 6B (strain Z29) (HHV-6 variant B), this protein is Protein U52 (U52).